Consider the following 239-residue polypeptide: Pyridoxine 5'-phosphate synthase (239 aa).

A 3-amino-2-oxopropyl phosphate-binding site is contributed by asparagine 7. 9–10 (DH) contributes to the 1-deoxy-D-xylulose 5-phosphate binding site. Arginine 18 serves as a coordination point for 3-amino-2-oxopropyl phosphate. Histidine 43 functions as the Proton acceptor in the catalytic mechanism. Arginine 45 and histidine 50 together coordinate 1-deoxy-D-xylulose 5-phosphate. The active-site Proton acceptor is the glutamate 70. Threonine 100 contacts 1-deoxy-D-xylulose 5-phosphate. Histidine 191 serves as the catalytic Proton donor. 3-amino-2-oxopropyl phosphate is bound by residues glycine 192 and 213 to 214 (GH).

The protein belongs to the PNP synthase family. As to quaternary structure, homooctamer; tetramer of dimers.

It localises to the cytoplasm. It catalyses the reaction 3-amino-2-oxopropyl phosphate + 1-deoxy-D-xylulose 5-phosphate = pyridoxine 5'-phosphate + phosphate + 2 H2O + H(+). It participates in cofactor biosynthesis; pyridoxine 5'-phosphate biosynthesis; pyridoxine 5'-phosphate from D-erythrose 4-phosphate: step 5/5. Catalyzes the complicated ring closure reaction between the two acyclic compounds 1-deoxy-D-xylulose-5-phosphate (DXP) and 3-amino-2-oxopropyl phosphate (1-amino-acetone-3-phosphate or AAP) to form pyridoxine 5'-phosphate (PNP) and inorganic phosphate. This is Pyridoxine 5'-phosphate synthase from Trichlorobacter lovleyi (strain ATCC BAA-1151 / DSM 17278 / SZ) (Geobacter lovleyi).